The chain runs to 269 residues: 4-hydroxy-tetrahydrodipicolinate reductase (269 aa).

NAD(+)-binding positions include 13–18 and Asp-39; that span reads GASGRM. Arg-40 contributes to the NADP(+) binding site. NAD(+)-binding positions include 101–103 and 125–128; these read GTT and APNM. His-158 (proton donor/acceptor) is an active-site residue. His-159 serves as a coordination point for (S)-2,3,4,5-tetrahydrodipicolinate. The active-site Proton donor is the Lys-162. 168 to 169 lines the (S)-2,3,4,5-tetrahydrodipicolinate pocket; it reads GT.

Belongs to the DapB family.

Its subcellular location is the cytoplasm. It catalyses the reaction (S)-2,3,4,5-tetrahydrodipicolinate + NAD(+) + H2O = (2S,4S)-4-hydroxy-2,3,4,5-tetrahydrodipicolinate + NADH + H(+). The enzyme catalyses (S)-2,3,4,5-tetrahydrodipicolinate + NADP(+) + H2O = (2S,4S)-4-hydroxy-2,3,4,5-tetrahydrodipicolinate + NADPH + H(+). Its pathway is amino-acid biosynthesis; L-lysine biosynthesis via DAP pathway; (S)-tetrahydrodipicolinate from L-aspartate: step 4/4. Functionally, catalyzes the conversion of 4-hydroxy-tetrahydrodipicolinate (HTPA) to tetrahydrodipicolinate. This chain is 4-hydroxy-tetrahydrodipicolinate reductase, found in Bordetella bronchiseptica (strain ATCC BAA-588 / NCTC 13252 / RB50) (Alcaligenes bronchisepticus).